We begin with the raw amino-acid sequence, 503 residues long: SH2 domain-containing adapter protein B (503 aa).

Disordered regions lie at residues 1-49 and 61-81; these read MAKW…QACS and CFSA…DLIR. Serine 101 is subject to Phosphoserine. The span at 147-157 shows a compositional bias: low complexity; that stretch reads AAASSSSSSGS. Positions 147 to 180 are disordered; that stretch reads AAASSSSSSGSPHLYRSSSERRPTTPAEVRYISP. Lysine 186 is covalently cross-linked (Glycyl lysine isopeptide (Lys-Gly) (interchain with G-Cter in SUMO2)). Disordered stretches follow at residues 225–262, 292–333, and 345–381; these read ETGA…SAGY, DTPY…YDQP, and AAQF…IKHG. Positions 244-256 are enriched in basic and acidic residues; that stretch reads FDAKSDLKSKAGK. Phosphoserine occurs at positions 301 and 311. Residues 301 to 311 are compositionally biased toward polar residues; that stretch reads SVDSDSESTVS. Over residues 313 to 328 the composition is skewed to basic and acidic residues; the sequence is RLRESKLPQDDDRPAD. The residue at position 382 (serine 382) is a Phosphoserine. An SH2 domain is found at 404–498; it reads WYHGAISRSD…AEHLSLLYPV (95 aa).

Interacts with phosphorylated 'Tyr-720' of the ligand-activated receptor PDGFRA via its SH2 domain. Interacts with the ligand-activated receptors PDGFRB, FGFR1, KDR/VEGFR2, IL2RB and IL2RG. Interacts with EPS8 and V-SRC. Interacts with GRB2 and GRAP. Interacts with CD3Z. Interacts with tyrosine-phosphorylated LAT upon T-cell antigen receptor activation. Interacts with PLCG1. Interacts with ZAP70, LCP2/SLP-76, VAV1 and GRAP2. Interacts with JAK1 and JAK3. Interacts with PTK2/FAK1. Interacts with CRK/CrKII. Interacts with IRS2. Interacts with PTPN11. In terms of processing, phosphorylated upon PDGFRA, PDGFRB, TCR, IL2 receptor, FGFR1 or VEGFR2 activation. In terms of tissue distribution, expressed in heart, liver, brain and kidney (at protein level).

It localises to the cytoplasm. The protein resides in the cell membrane. Its function is as follows. Adapter protein which regulates several signal transduction cascades by linking activated receptors to downstream signaling components. May play a role in angiogenesis by regulating FGFR1, VEGFR2 and PDGFR signaling. May also play a role in T-cell antigen receptor/TCR signaling, interleukin-2 signaling, apoptosis and neuronal cells differentiation by mediating basic-FGF and NGF-induced signaling cascades. May also regulate IRS1 and IRS2 signaling in insulin-producing cells. This Mus musculus (Mouse) protein is SH2 domain-containing adapter protein B (Shb).